We begin with the raw amino-acid sequence, 321 residues long: Annexin B10 (321 aa).

4 Annexin repeats span residues 15–86 (FDAS…GLMM), 87–158 (PPVE…LIVT), 171–243 (GQAK…AIVE), and 247–319 (SPAA…ALLG).

Belongs to the annexin family.

The polypeptide is Annexin B10 (AnxB10) (Drosophila melanogaster (Fruit fly)).